The following is a 209-amino-acid chain: Octanoyltransferase (209 aa).

The BPL/LPL catalytic domain occupies 30 to 209; that stretch reads DNEPEIVYLV…IQTEFNKIFK (180 aa). Residues 69–76, 143–145, and 156–158 each bind substrate; these read RGGKFTFH, AIG, and GIA. Cys174 acts as the Acyl-thioester intermediate in catalysis.

The protein belongs to the LipB family.

Its subcellular location is the cytoplasm. The catalysed reaction is octanoyl-[ACP] + L-lysyl-[protein] = N(6)-octanoyl-L-lysyl-[protein] + holo-[ACP] + H(+). It functions in the pathway protein modification; protein lipoylation via endogenous pathway; protein N(6)-(lipoyl)lysine from octanoyl-[acyl-carrier-protein]: step 1/2. In terms of biological role, catalyzes the transfer of endogenously produced octanoic acid from octanoyl-acyl-carrier-protein onto the lipoyl domains of lipoate-dependent enzymes. Lipoyl-ACP can also act as a substrate although octanoyl-ACP is likely to be the physiological substrate. This chain is Octanoyltransferase, found in Rickettsia prowazekii (strain Madrid E).